Here is a 33-residue protein sequence, read N- to C-terminus: Photosystem II reaction center protein Psb30 (33 aa).

A helical membrane pass occupies residues valine 5–leucine 25.

The protein belongs to the Psb30/Ycf12 family. PSII is composed of 1 copy each of membrane proteins PsbA, PsbB, PsbC, PsbD, PsbE, PsbF, PsbH, PsbI, PsbJ, PsbK, PsbL, PsbM, PsbT, PsbX, PsbY, PsbZ, Psb30/Ycf12, peripheral proteins of the oxygen-evolving complex and a large number of cofactors. It forms dimeric complexes.

The protein resides in the plastid. It localises to the chloroplast thylakoid membrane. In terms of biological role, a core subunit of photosystem II (PSII), probably helps stabilize the reaction center. In Oltmannsiellopsis viridis (Marine flagellate), this protein is Photosystem II reaction center protein Psb30.